We begin with the raw amino-acid sequence, 355 residues long: DNA-binding protein RHL1 (355 aa).

Disordered regions lie at residues 1–26 (MVRA…KQRK), 181–215 (DFQG…VDNE), and 229–355 (IQVT…SSKA). The segment covering 14 to 23 (GGDKDDAESK) has biased composition (basic and acidic residues). 2 stretches are compositionally biased toward low complexity: residues 230–246 (QVTP…VTPV) and 260–274 (AETS…SEGN). 2 stretches are compositionally biased toward basic and acidic residues: residues 281–296 (KPLL…REES) and 309–326 (LPEE…KDSK). Residues 344 to 355 (AGTSKAKSSSKA) are compositionally biased toward low complexity.

As to quaternary structure, interacts with BIN4 and TOP6A, but not with TOP6B. As to expression, expressed inproliferating and endoreduplicating cells.

The protein resides in the nucleus. Component of the DNA topoisomerase VI complex involved in chromatin organization and progression of endoreduplication cycles. Binds to DNA. Required for endoreduplication beyond 8C. The sequence is that of DNA-binding protein RHL1 (RHL1) from Arabidopsis thaliana (Mouse-ear cress).